A 350-amino-acid chain; its full sequence is Eukaryotic translation initiation factor 3 subunit I (350 aa).

6 WD repeats span residues 8–49, 51–89, 91–135, 149–190, 198–240, and 296–335; these read GHER…GTLE, HQGV…CVYT, NSPS…ASLT, QNGS…KSLQ, EKNV…KVYK, and GHFG…KDFL.

It belongs to the eIF-3 subunit I family. Component of the eukaryotic translation initiation factor 3 (eIF-3) complex.

The protein resides in the cytoplasm. Functionally, component of the eukaryotic translation initiation factor 3 (eIF-3) complex, which is involved in protein synthesis of a specialized repertoire of mRNAs and, together with other initiation factors, stimulates binding of mRNA and methionyl-tRNAi to the 40S ribosome. The eIF-3 complex specifically targets and initiates translation of a subset of mRNAs involved in cell proliferation. The sequence is that of Eukaryotic translation initiation factor 3 subunit I from Lodderomyces elongisporus (strain ATCC 11503 / CBS 2605 / JCM 1781 / NBRC 1676 / NRRL YB-4239) (Yeast).